Here is a 361-residue protein sequence, read N- to C-terminus: Protein RecA (361 aa).

77–84 (GPESSGKT) serves as a coordination point for ATP.

It belongs to the RecA family.

The protein localises to the cytoplasm. Its function is as follows. Can catalyze the hydrolysis of ATP in the presence of single-stranded DNA, the ATP-dependent uptake of single-stranded DNA by duplex DNA, and the ATP-dependent hybridization of homologous single-stranded DNAs. It interacts with LexA causing its activation and leading to its autocatalytic cleavage. This chain is Protein RecA, found in Sinorhizobium medicae (strain WSM419) (Ensifer medicae).